Here is a 503-residue protein sequence, read N- to C-terminus: Anaerobic nitric oxide reductase flavorubredoxin (503 aa).

Residues 30–210 (LQGSSYNSYL…PFSRLVTAKI (181 aa)) form a zinc metallo-hydrolase region. Positions 79, 81, 83, 147, 166, and 227 each coordinate Fe cation. Positions 254-393 (ITLFYDTMSN…ICREHGREIA (140 aa)) constitute a Flavodoxin-like domain. Residues 260–264 (TMSNN) and 342–369 (AFGS…ETTL) contribute to the FMN site. One can recognise a Rubredoxin-like domain in the interval 451-502 (NGCMQCSVCQWIYDPALGEPMQDVTPGTMWSDVPDSFLCPECGLGKDVFNPI). 4 residues coordinate Fe cation: Cys456, Cys459, Cys489, and Cys492.

It in the N-terminal section; belongs to the zinc metallo-hydrolase group 3 family. Homotetramer. Fe cation serves as cofactor. FMN is required as a cofactor.

It is found in the cytoplasm. It functions in the pathway nitrogen metabolism; nitric oxide reduction. Its function is as follows. Anaerobic nitric oxide reductase; uses NADH to detoxify nitric oxide (NO), protecting several 4Fe-4S NO-sensitive enzymes. Has at least 2 reductase partners, only one of which (NorW, flavorubredoxin reductase) has been identified. NO probably binds to the di-iron center; electrons enter from the NorW at rubredoxin and are transferred sequentially to the FMN center and the di-iron center. Also able to function as an aerobic oxygen reductase. This is Anaerobic nitric oxide reductase flavorubredoxin from Pectobacterium carotovorum subsp. carotovorum (strain PC1).